An 82-amino-acid chain; its full sequence is Turripeptide Gdm9.1 (82 aa).

A signal peptide spans 1-23 (MMAKLMITVMMVLLLSLQQGADG). Residues 24 to 46 (RSERWRKNQMAASRIMRNLITAR) constitute a propeptide that is removed on maturation. A 4-hydroxyproline mark is found at P49 and P50. Disulfide bonds link C53–C68, C58–C72, and C64–C79. E60 and E63 each carry 4-carboxyglutamate.

This sequence belongs to the Pg turripeptide superfamily. Expressed by the venom duct.

It localises to the secreted. The polypeptide is Turripeptide Gdm9.1 (Gemmula diomedea (Gem-turris)).